The chain runs to 130 residues: Protein ApaG (130 aa).

An ApaG domain is found at 3–127 (KAETRGISVI…FSLDVPHMRR (125 aa)).

The sequence is that of Protein ApaG from Methylobacterium nodulans (strain LMG 21967 / CNCM I-2342 / ORS 2060).